The sequence spans 273 residues: Putative phosphoenolpyruvate synthase regulatory protein (273 aa).

Glycine 153 to threonine 160 is a binding site for ADP.

The protein belongs to the pyruvate, phosphate/water dikinase regulatory protein family. PSRP subfamily.

It catalyses the reaction [pyruvate, water dikinase] + ADP = [pyruvate, water dikinase]-phosphate + AMP + H(+). It carries out the reaction [pyruvate, water dikinase]-phosphate + phosphate + H(+) = [pyruvate, water dikinase] + diphosphate. In terms of biological role, bifunctional serine/threonine kinase and phosphorylase involved in the regulation of the phosphoenolpyruvate synthase (PEPS) by catalyzing its phosphorylation/dephosphorylation. This Delftia acidovorans (strain DSM 14801 / SPH-1) protein is Putative phosphoenolpyruvate synthase regulatory protein.